The chain runs to 1090 residues: Exoglucanase B (1090 aa).

The first 33 residues, 1-33 (MSSTTRRRSAWVAAATVGVSSFLAVAGITPAIA), serve as a signal peptide directing secretion. Residues 34–53 (AAGAGQPATVTVPAASPVRA) constitute a propeptide that is removed on maturation. Positions 54–699 (AVDGEYAQRF…RLFDDGTTTP (646 aa)) are catalytic. Asp-513 serves as the catalytic Nucleophile. 3 consecutive Fibronectin type-III domains span residues 706 to 791 (VPTG…TKAT), 797 to 887 (APSV…TKSD), and 897 to 984 (VPAG…TKTP). The CBM2 domain maps to 983 to 1090 (TPQTGGSCSV…SFTLNGASCT (108 aa)). Cys-990 and Cys-1089 are joined by a disulfide. The tract at residues 1069-1090 (NGSHTGQNPNPASFTLNGASCT) is disordered. Residues 1070–1090 (GSHTGQNPNPASFTLNGASCT) show a composition bias toward polar residues.

This sequence belongs to the glycosyl hydrolase 48 (cellulase L) family.

It catalyses the reaction Hydrolysis of (1-&gt;4)-beta-D-glucosidic linkages in cellulose and cellotetraose, releasing cellobiose from the non-reducing ends of the chains.. In terms of biological role, hydrolyzes cellohexaose to a mixture of cellotetraose, cellotriose and cellobiose, with only a trace of glucose. It hydrolyzed cellopentaose to cellotriose and cellobiose, and cellotetraose to cellobiose, but it did not hydrolyze cellotriose. Also has weak endoglucanase activity. Hydrolyzes glucosidic bonds with inversion of anomeric configuration. This chain is Exoglucanase B (cbhB), found in Cellulomonas fimi (strain ATCC 484 / DSM 20113 / JCM 1341 / CCUG 24087 / LMG 16345 / NBRC 15513 / NCIMB 8980 / NCTC 7547 / NRS-133).